Here is a 352-residue protein sequence, read N- to C-terminus: Ferrochelatase (352 aa).

The Fe cation site is built by His222 and Glu303.

Belongs to the ferrochelatase family.

It is found in the cytoplasm. It catalyses the reaction heme b + 2 H(+) = protoporphyrin IX + Fe(2+). The protein operates within porphyrin-containing compound metabolism; protoheme biosynthesis; protoheme from protoporphyrin-IX: step 1/1. In terms of biological role, catalyzes the ferrous insertion into protoporphyrin IX. The sequence is that of Ferrochelatase from Brucella canis (strain ATCC 23365 / NCTC 10854 / RM-666).